The following is a 371-amino-acid chain: Cell division control protein 3 (371 aa).

One can recognise a Septin-type G domain in the interval 22-307; it reads AGIDFNIMTV…DEYKTREIGL (286 aa). A G1 motif region spans residues 32–39; it reads GSNGLGKS. Residues 32–39, glycine 116, 195–203, and arginine 257 contribute to the GTP site; these read GSNGLGKS and KSDLLSDSE. Positions 113–116 are G3 motif; the sequence is EVDG. Residues 194 to 197 are G4 motif; it reads GKSD.

The protein belongs to the TRAFAC class TrmE-Era-EngA-EngB-Septin-like GTPase superfamily. Septin GTPase family. As to quaternary structure, component of the septin complex.

Its function is as follows. Septins are GTPases involved in cytokinesis. The septins localize to the site of cleavage and act as a structural scaffold that recruits different components involved in diverse processes at specific stages during the cell cycle. Septins are also involved in cell morphogenesis, chitin deposition, cell cycle regulation, cell compartmentalization and spore wall formation. The sequence is that of Cell division control protein 3 (CDC3) from Encephalitozoon cuniculi (strain GB-M1) (Microsporidian parasite).